A 1011-amino-acid chain; its full sequence is DNA-directed RNA polymerase 2, chloroplastic/mitochondrial (1011 aa).

A disordered region spans residues 307 to 326 (KGDDNEESGGVENETSMKEQ). Catalysis depends on residues D712, K787, and D944.

It belongs to the phage and mitochondrial RNA polymerase family. As to quaternary structure, interacts with NIP1 and NIP2.

The protein localises to the plastid. It is found in the chloroplast. Its subcellular location is the mitochondrion. It catalyses the reaction RNA(n) + a ribonucleoside 5'-triphosphate = RNA(n+1) + diphosphate. DNA-dependent RNA polymerase catalyzes the transcription of DNA into RNA using the four ribonucleoside triphosphates as substrates. The polypeptide is DNA-directed RNA polymerase 2, chloroplastic/mitochondrial (RPOT2) (Arabidopsis thaliana (Mouse-ear cress)).